Here is a 116-residue protein sequence, read N- to C-terminus: Large ribosomal subunit protein bL17 (116 aa).

This sequence belongs to the bacterial ribosomal protein bL17 family. Part of the 50S ribosomal subunit. Contacts protein L32.

The sequence is that of Large ribosomal subunit protein bL17 from Prochlorococcus marinus (strain MIT 9215).